Here is a 296-residue protein sequence, read N- to C-terminus: Polyamine aminopropyltransferase (296 aa).

Positions 16 to 251 constitute a PABS domain; it reads HLWYFEYYTG…GMWSYTFASK (236 aa). Glutamine 46 serves as a coordination point for S-methyl-5'-thioadenosine. Positions 77 and 101 each coordinate spermidine. S-methyl-5'-thioadenosine contacts are provided by residues glutamate 121 and 152 to 153; that span reads NG. Aspartate 170 serves as the catalytic Proton acceptor. 170 to 173 serves as a coordination point for spermidine; it reads DSTD.

It belongs to the spermidine/spermine synthase family. Homodimer or homotetramer.

It localises to the cytoplasm. The enzyme catalyses S-adenosyl 3-(methylsulfanyl)propylamine + putrescine = S-methyl-5'-thioadenosine + spermidine + H(+). It functions in the pathway amine and polyamine biosynthesis; spermidine biosynthesis; spermidine from putrescine: step 1/1. In terms of biological role, catalyzes the irreversible transfer of a propylamine group from the amino donor S-adenosylmethioninamine (decarboxy-AdoMet) to putrescine (1,4-diaminobutane) to yield spermidine. The protein is Polyamine aminopropyltransferase of Thermotoga petrophila (strain ATCC BAA-488 / DSM 13995 / JCM 10881 / RKU-1).